The following is a 193-amino-acid chain: Peptidyl-tRNA hydrolase 1 (193 aa).

Tyrosine 27 lines the tRNA pocket. Histidine 32 serves as the catalytic Proton acceptor. Residues phenylalanine 80, asparagine 82, and asparagine 128 each coordinate tRNA.

This sequence belongs to the PTH family. Monomer.

Its subcellular location is the cytoplasm. It catalyses the reaction an N-acyl-L-alpha-aminoacyl-tRNA + H2O = an N-acyl-L-amino acid + a tRNA + H(+). Hydrolyzes ribosome-free peptidyl-tRNAs (with 1 or more amino acids incorporated), which drop off the ribosome during protein synthesis, or as a result of ribosome stalling. Functionally, catalyzes the release of premature peptidyl moieties from peptidyl-tRNA molecules trapped in stalled 50S ribosomal subunits, and thus maintains levels of free tRNAs and 50S ribosomes. In Corynebacterium jeikeium (strain K411), this protein is Peptidyl-tRNA hydrolase 1.